Reading from the N-terminus, the 103-residue chain is MERIRLKLKAYDHRVLDRTVAAIVEAVKRTGADIRGPVPMPTKIKRYTVLKSPHINKDSREQFEMRIHARMLDIVAATPDTVDSLTKLDLAPEVNVEVRAMGK.

The protein belongs to the universal ribosomal protein uS10 family. Part of the 30S ribosomal subunit.

Involved in the binding of tRNA to the ribosomes. The protein is Small ribosomal subunit protein uS10 of Campylobacter lari (strain RM2100 / D67 / ATCC BAA-1060).